Consider the following 1585-residue polypeptide: uncharacterized protein (1585 aa).

Residues 12–59 (DKISRKLRMIQGNAERLKRAANGPLIFEAEDRTERVMRQIDRSANRLT) adopt a coiled-coil conformation. Disordered regions lie at residues 586–627 (PKRT…SLPR) and 645–692 (IRRR…NPTR). The segment covering 618 to 627 (TATGPTSLPR) has biased composition (polar residues). The segment covering 645 to 655 (IRRRRGKRVLG) has biased composition (basic residues). Over residues 661–672 (NRMNPSDSSIAV) the composition is skewed to polar residues. Phosphoserine occurs at positions 970 and 972.

It to B.subtilis XkdO.

This is an uncharacterized protein from Bacillus subtilis (strain 168).